The chain runs to 1165 residues: Peroxisomal ATPase PEX6 (1165 aa).

This sequence belongs to the AAA ATPase family. Interacts with PEX1; forming the PEX1-PEX6 AAA ATPase complex, which is composed of a heterohexamer formed by a trimer of PEX1-PEX6 dimers.

The protein resides in the membrane. It carries out the reaction ATP + H2O = ADP + phosphate + H(+). Its function is as follows. Component of the PEX1-PEX6 AAA ATPase complex involved in peroxisome biosynthesis. The complex acts as a protein dislocase complex that mediates the ATP-dependent extraction of the PEX5 receptor from peroxisomal membranes, an essential step for PEX5 recycling. Specifically recognizes PEX5 monoubiquitinated at 'Cys-6', and pulls it out of the peroxisome lumen through the PEX2-PEX10-PEX12 retrotranslocation channel. Extraction by the PEX1-PEX6 AAA ATPase complex is accompanied by unfolding of the TPR repeats and release of bound cargo from PEX5. The protein is Peroxisomal ATPase PEX6 of Komagataella pastoris (Yeast).